The primary structure comprises 194 residues: Probable GTP-binding protein EngB (194 aa).

Residues 23 to 194 (DKMEFAFVGR…LNFMEEKLNN (172 aa)) enclose the EngB-type G domain. GTP-binding positions include 31–38 (GRSNVGKS), 58–62 (GRTQL), 76–79 (DLPG), 142–145 (TKID), and 173–175 (HSS). Mg(2+) contacts are provided by serine 38 and threonine 60.

It belongs to the TRAFAC class TrmE-Era-EngA-EngB-Septin-like GTPase superfamily. EngB GTPase family. Mg(2+) serves as cofactor.

In terms of biological role, necessary for normal cell division and for the maintenance of normal septation. This is Probable GTP-binding protein EngB from Fusobacterium nucleatum subsp. nucleatum (strain ATCC 25586 / DSM 15643 / BCRC 10681 / CIP 101130 / JCM 8532 / KCTC 2640 / LMG 13131 / VPI 4355).